The sequence spans 137 residues: Nucleoside diphosphate kinase (137 aa).

ATP is bound by residues K10, F58, R86, T92, R103, and N113. H116 (pros-phosphohistidine intermediate) is an active-site residue.

It belongs to the NDK family. In terms of assembly, homotetramer. It depends on Mg(2+) as a cofactor.

Its subcellular location is the cytoplasm. The catalysed reaction is a 2'-deoxyribonucleoside 5'-diphosphate + ATP = a 2'-deoxyribonucleoside 5'-triphosphate + ADP. It carries out the reaction a ribonucleoside 5'-diphosphate + ATP = a ribonucleoside 5'-triphosphate + ADP. Functionally, major role in the synthesis of nucleoside triphosphates other than ATP. The ATP gamma phosphate is transferred to the NDP beta phosphate via a ping-pong mechanism, using a phosphorylated active-site intermediate. The polypeptide is Nucleoside diphosphate kinase (Helicobacter pylori (strain Shi470)).